The sequence spans 199 residues: Recombination protein RecR (199 aa).

A C4-type zinc finger spans residues 58–73; sequence CSVCTNLTDRDPCRIC. Residues 81-176 enclose the Toprim domain; the sequence is AVICVVEEPR…KVTRIAHGLP (96 aa).

Belongs to the RecR family.

May play a role in DNA repair. It seems to be involved in an RecBC-independent recombinational process of DNA repair. It may act with RecF and RecO. The protein is Recombination protein RecR of Heliobacterium modesticaldum (strain ATCC 51547 / Ice1).